The chain runs to 196 residues: Peptidyl-tRNA hydrolase (196 aa).

TRNA is bound at residue Tyr14. The active-site Proton acceptor is the His19. TRNA is bound by residues Phe64, Asn66, and Asn112.

Belongs to the PTH family. Monomer.

It localises to the cytoplasm. The enzyme catalyses an N-acyl-L-alpha-aminoacyl-tRNA + H2O = an N-acyl-L-amino acid + a tRNA + H(+). Its function is as follows. Hydrolyzes ribosome-free peptidyl-tRNAs (with 1 or more amino acids incorporated), which drop off the ribosome during protein synthesis, or as a result of ribosome stalling. Functionally, catalyzes the release of premature peptidyl moieties from peptidyl-tRNA molecules trapped in stalled 50S ribosomal subunits, and thus maintains levels of free tRNAs and 50S ribosomes. The sequence is that of Peptidyl-tRNA hydrolase from Solibacter usitatus (strain Ellin6076).